Reading from the N-terminus, the 212-residue chain is Transmembrane emp24 domain-containing protein p24delta7 (212 aa).

Residues 1 to 22 (MNHRRSSIVLLILSILSPVTLS) form the signal peptide. The Lumenal portion of the chain corresponds to 23–179 (IRYELLSGHT…HNLNIATNSK (157 aa)). In terms of domain architecture, GOLD spans 32–147 (TKCISEEIHA…VETMEFEVKK (116 aa)). Residues 162-175 (LRDREEEMHNLNIA) adopt a coiled-coil conformation. Arg165 is subject to Omega-N-methylated arginine. The helical transmembrane segment at 180 to 200 (MAWLSFVSLAVCLSVAGLQFW) threads the bilayer. Residues 201-212 (HLKTFFQKKKLI) are Cytoplasmic-facing. The COPII vesicle coat-binding motif lies at 205–206 (FF). The COPI vesicle coat-binding motif lies at 205-212 (FFQKKKLI).

Belongs to the EMP24/GP25L family. In terms of assembly, probably oligomerizes with other members of the EMP24/GP25L family. Associates with the COPI vesicle coat (coatomer). Associates with the COPII vesicle coat (coatomer).

It is found in the endoplasmic reticulum membrane. Its subcellular location is the golgi apparatus. The protein localises to the cis-Golgi network membrane. The protein resides in the golgi stack membrane. Its function is as follows. Involved in vesicular protein trafficking. Mainly functions in the early secretory pathway. Thought to act as cargo receptor at the lumenal side for incorporation of secretory cargo molecules into transport vesicles and to be involved in vesicle coat formation at the cytoplasmic side. This chain is Transmembrane emp24 domain-containing protein p24delta7, found in Arabidopsis thaliana (Mouse-ear cress).